A 642-amino-acid chain; its full sequence is Serine/threonine-protein kinase pakA (642 aa).

Polar residues-rich tracts occupy residues 1–12 and 38–48; these read MSLKKQQQQSDF and LRQSASFTALN. The interval 1-82 is disordered; that stretch reads MSLKKQQQQS…GFGTKPRRKN (82 aa). In terms of domain architecture, CRIB spans 100-113; the sequence is ISAPENPVHVTHVG. Disordered stretches follow at residues 180 to 276 and 317 to 338; these read GEYP…PIPE and QLDR…RTRQ. 2 stretches are compositionally biased toward low complexity: residues 217–227 and 254–266; these read SQSSPVPVLSS and VVSN…RPAN. In terms of domain architecture, Protein kinase spans 361–612; that stretch reads YYNLNKIGQG…AHDLLKHPFM (252 aa). ATP is bound by residues 367–375 and Lys-390; that span reads IGQGASGGV. Residue Asp-480 is the Proton acceptor of the active site.

Belongs to the protein kinase superfamily. STE Ser/Thr protein kinase family. STE20 subfamily.

It is found in the cytoplasm. The protein localises to the nucleus. It carries out the reaction L-seryl-[protein] + ATP = O-phospho-L-seryl-[protein] + ADP + H(+). It catalyses the reaction L-threonyl-[protein] + ATP = O-phospho-L-threonyl-[protein] + ADP + H(+). In terms of biological role, MAP4K component of the MAPK pathway required for the mating pheromone response and the regulation of cell polarity and cell cycle. This Talaromyces marneffei (Penicillium marneffei) protein is Serine/threonine-protein kinase pakA (pakA).